The chain runs to 169 residues: Probable chorismate pyruvate-lyase (169 aa).

3 residues coordinate substrate: arginine 71, isoleucine 110, and glutamate 150.

Belongs to the UbiC family.

The protein localises to the cytoplasm. The enzyme catalyses chorismate = 4-hydroxybenzoate + pyruvate. It functions in the pathway cofactor biosynthesis; ubiquinone biosynthesis. Removes the pyruvyl group from chorismate, with concomitant aromatization of the ring, to provide 4-hydroxybenzoate (4HB) for the ubiquinone pathway. The chain is Probable chorismate pyruvate-lyase from Acinetobacter baumannii (strain ATCC 17978 / DSM 105126 / CIP 53.77 / LMG 1025 / NCDC KC755 / 5377).